The primary structure comprises 479 residues: UDP-N-acetylmuramate--L-alanine ligase (479 aa).

Residue 115-121 (GTHGKTT) coordinates ATP.

Belongs to the MurCDEF family.

It localises to the cytoplasm. It carries out the reaction UDP-N-acetyl-alpha-D-muramate + L-alanine + ATP = UDP-N-acetyl-alpha-D-muramoyl-L-alanine + ADP + phosphate + H(+). The protein operates within cell wall biogenesis; peptidoglycan biosynthesis. In terms of biological role, cell wall formation. The sequence is that of UDP-N-acetylmuramate--L-alanine ligase from Acidiphilium cryptum (strain JF-5).